The chain runs to 336 residues: Aldo-keto reductase str7 (336 aa).

Aspartate 57 contacts NADP(+). Catalysis depends on tyrosine 62, which acts as the Proton donor. Residue histidine 124 participates in substrate binding. NADP(+)-binding positions include serine 154–glutamate 155, glutamine 174, serine 206–proline 220, and lysine 283–asparagine 291.

This sequence belongs to the aldo/keto reductase family. Aldo/keto reductase 2 subfamily.

The protein operates within mycotoxin biosynthesis. Aldo-keto reductase; part of the gene cluster that mediates the biosynthesis of strobilurin A, an antifungal polyketide that contains a key beta-methoxyacrylate toxophore that targets the complex III of the mitochondrial electron transport chain. Strobilurin biosynthesis begins with construction of benzoyl CoA by step-wise elimination of ammonia from phenylalanine by the phenylalanine ammonia-lyase str11, oxygenation by str8 and retro-Claisen reaction to form benzoic acid, which is activated to its CoA thiolester benzoyl CoA by the dedicated CoA ligase str10. Benzoyl CoA forms the starter unit for the highly reducing polyketide synthase stpks1 that produces the polyketide prestrobilutin A. The FAD-dependent oxygenase str9 then catalyzes the key oxidative rearrangement responsible for the creation of the beta-methoxyacrylate toxophore. Str9 performs epoxidation of the 2,3 olefin of prestrobilutin A, followed by Meinwald rearrangement to furnish the aldehyde intermediate. Rapid enolization of the aldehyde intermediate would give the beta-methoxyacrylate skeleton and methylations catalyzed by str2 and str3 complete the synthesis and lead to the production of strobilurin A. The short-chain dehydrogenase stl2 and the dehydrogenase str4 play a role in the shunt pathway leading to the production of bolineol. The cluster encodes no obvious halogenase gene that could be involved in production of strobilurin B, nor any obvious dimethylallyl-transferase that could be involved in the production of strobilurin G. It is possible that unknown proteins encoded in, or near, the cluster (such as str1 or stl1) may form new classes of halogenases or dimethylally-transferases, or that the responsible genes are located elsewhere on the genome. Similarly, proteins encoded by str5/str6 hydrolases appear to have no chemical role in the biosynthesis of strobilurin A. Finally, no obvious self-resistance gene is found within the cluster. The polypeptide is Aldo-keto reductase str7 (Strobilurus tenacellus).